The sequence spans 259 residues: Steroidogenic acute regulatory-like protein 1 (259 aa).

The signal sequence occupies residues 1-20; that stretch reads MTLLPFTCLILLYSLGSVMS. The region spanning 43–254 is the START domain; sequence YATALKTCGE…NRRHFQNLKA (212 aa).

The sequence is that of Steroidogenic acute regulatory-like protein 1 (strl-1) from Caenorhabditis elegans.